A 322-amino-acid polypeptide reads, in one-letter code: DNA repair and recombination protein RadA (322 aa).

An ATP-binding site is contributed by 105–112; the sequence is GMFGSGKT.

It belongs to the eukaryotic RecA-like protein family.

Its function is as follows. Involved in DNA repair and in homologous recombination. Binds and assemble on single-stranded DNA to form a nucleoprotein filament. Hydrolyzes ATP in a ssDNA-dependent manner and promotes DNA strand exchange between homologous DNA molecules. The protein is DNA repair and recombination protein RadA of Methanococcus maripaludis (Methanococcus deltae).